Reading from the N-terminus, the 632-residue chain is 1-deoxy-D-xylulose-5-phosphate synthase (632 aa).

Residues histidine 77 and 118-120 (GHA) contribute to the thiamine diphosphate site. Position 149 (aspartate 149) interacts with Mg(2+). Residues 150-151 (GS), asparagine 178, phenylalanine 287, and glutamate 372 each bind thiamine diphosphate. Mg(2+) is bound at residue asparagine 178.

Belongs to the transketolase family. DXPS subfamily. As to quaternary structure, homodimer. Mg(2+) is required as a cofactor. It depends on thiamine diphosphate as a cofactor.

The enzyme catalyses D-glyceraldehyde 3-phosphate + pyruvate + H(+) = 1-deoxy-D-xylulose 5-phosphate + CO2. Its pathway is metabolic intermediate biosynthesis; 1-deoxy-D-xylulose 5-phosphate biosynthesis; 1-deoxy-D-xylulose 5-phosphate from D-glyceraldehyde 3-phosphate and pyruvate: step 1/1. Its function is as follows. Catalyzes the acyloin condensation reaction between C atoms 2 and 3 of pyruvate and glyceraldehyde 3-phosphate to yield 1-deoxy-D-xylulose-5-phosphate (DXP). The polypeptide is 1-deoxy-D-xylulose-5-phosphate synthase (Chlorobium luteolum (strain DSM 273 / BCRC 81028 / 2530) (Pelodictyon luteolum)).